The chain runs to 265 residues: Transcriptional activator TAF-1 (265 aa).

Disordered stretches follow at residues 1 to 133 (AHGG…SEKA) and 167 to 218 (THLK…KQAE). The segment covering 35–46 (ASLSLDASAKSS) has biased composition (low complexity). Basic and acidic residues-rich tracts occupy residues 103–115 (RETT…DSKS) and 191–209 (NERE…ESAR). The bZIP domain maps to 194 to 257 (ELKREKRKQS…EKLKLENAAL (64 aa)). The segment at 196–215 (KREKRKQSNRESARRSRLRK) is basic motif. Positions 222–257 (LAIRVQSLTAENMTLKSEINKLMENSEKLKLENAAL) are leucine-zipper.

The protein belongs to the bZIP family. In terms of tissue distribution, present mainly in roots. Barely detectable in stems and leaves.

The protein localises to the nucleus. Trans-activator of a beta-glucuronidase (GUS) reporter gene. Binds to a G-box-related element, (5'-GCAACGTGGC-3'). Also binds to the HEX-motif of wheat histone H3 promoter. This Nicotiana tabacum (Common tobacco) protein is Transcriptional activator TAF-1 (TAF1).